A 302-amino-acid polypeptide reads, in one-letter code: Aliphatic sulfonates import ATP-binding protein SsuB (302 aa).

Residues 30–57 (PATADAQHTADAQHTADAQHTADAQHTA) are compositionally biased toward low complexity. The tract at residues 30 to 65 (PATADAQHTADAQHTADAQHTADAQHTAETAETRGA) is disordered. Positions 70 to 284 (IRIRGLRRTF…RRTDPAFDRL (215 aa)) constitute an ABC transporter domain. 102–109 (GRSGSGKS) provides a ligand contact to ATP.

This sequence belongs to the ABC transporter superfamily. Aliphatic sulfonates importer (TC 3.A.1.17.2) family. The complex is composed of two ATP-binding proteins (SsuB), two transmembrane proteins (SsuC) and a solute-binding protein (SsuA).

It localises to the cell membrane. It catalyses the reaction ATP + H2O + aliphatic sulfonate-[sulfonate-binding protein]Side 1 = ADP + phosphate + aliphatic sulfonateSide 2 + [sulfonate-binding protein]Side 1.. Part of the ABC transporter complex SsuABC involved in aliphatic sulfonates import. Responsible for energy coupling to the transport system. The polypeptide is Aliphatic sulfonates import ATP-binding protein SsuB (Frankia casuarinae (strain DSM 45818 / CECT 9043 / HFP020203 / CcI3)).